Consider the following 435-residue polypeptide: Pregnancy-specific beta-1-glycoprotein 6 (435 aa).

The signal sequence occupies residues 1–34 (MGPLSAPPCTQHITWKGLLLTASLLNFWNLPTTA). Residues 35 to 143 (QVIIEAKPPK…TGYFTVTLYS (109 aa)) enclose the Ig-like V-type domain. 3 N-linked (GlcNAc...) asparagine glycosylation sites follow: Asn61, Asn103, and Asn110. The Cell attachment site motif lies at 126-128 (RGD). 3 Ig-like C2-type domains span residues 148 to 233 (PSIS…VTLN), 241 to 326 (PYIT…VTLN), and 334 to 405 (PRIY…KEIS). Cystine bridges form between Cys168/Cys216, Cys261/Cys309, and Cys353/Cys393. N-linked (GlcNAc...) asparagine glycosylation is found at Asn198, Asn267, Asn302, and Asn386.

It belongs to the immunoglobulin superfamily. CEA family.

The protein localises to the secreted. This Homo sapiens (Human) protein is Pregnancy-specific beta-1-glycoprotein 6 (PSG6).